The following is a 259-amino-acid chain: Expansin-B4 (259 aa).

An N-terminal signal peptide occupies residues 1–23 (MASSQRYFALLALFAVSLKFCYC). The N-linked (GlcNAc...) asparagine glycan is linked to N25. Residues 51 to 161 (GGACGYGSAV…KRAACLYRGT (111 aa)) enclose the Expansin-like EG45 domain. 3 disulfide bridges follow: C54/C83, C86/C156, and C91/C97. The 82-residue stretch at 174–255 (YYISFVVEYE…NWKPDESYRS (82 aa)) folds into the Expansin-like CBD domain.

Belongs to the expansin family. Expansin B subfamily.

It localises to the secreted. The protein resides in the cell wall. Its subcellular location is the membrane. In terms of biological role, may cause loosening and extension of plant cell walls by disrupting non-covalent bonding between cellulose microfibrils and matrix glucans. No enzymatic activity has been found. The sequence is that of Expansin-B4 (EXPB4) from Arabidopsis thaliana (Mouse-ear cress).